Here is a 292-residue protein sequence, read N- to C-terminus: uncharacterized protein (292 aa).

This is an uncharacterized protein from Escherichia coli (strain K12).